A 270-amino-acid chain; its full sequence is Small ribosomal subunit protein uS3 (270 aa).

The 69-residue stretch at 38 to 106 folds into the KH type-2 domain; sequence IRQMLTRGME…QVQLNILEVK (69 aa). The segment at 212–270 is disordered; it reads EREAAQAAQRAAGPQRRERPGRRRRGGGGGGGQQQQQAEKATAQATEAAKAAKSGNEGS. 2 stretches are compositionally biased toward low complexity: residues 216–225 and 245–263; these read AQAAQRAAGP and QQQQ…AKAA.

It belongs to the universal ribosomal protein uS3 family. Part of the 30S ribosomal subunit. Forms a tight complex with proteins S10 and S14.

In terms of biological role, binds the lower part of the 30S subunit head. Binds mRNA in the 70S ribosome, positioning it for translation. In Thermobifida fusca (strain YX), this protein is Small ribosomal subunit protein uS3.